Consider the following 122-residue polypeptide: Probable DNA-directed RNA polymerase II subunit RPB11 (122 aa).

It belongs to the archaeal Rpo11/eukaryotic RPB11/RPC19 RNA polymerase subunit family. Component of the RNA polymerase II (Pol II) complex consisting of 12 subunits.

The protein localises to the nucleus. In terms of biological role, DNA-dependent RNA polymerase catalyzes the transcription of DNA into RNA using the four ribonucleoside triphosphates as substrates. Component of RNA polymerase II which synthesizes mRNA precursors and many functional non-coding RNAs. Pol II is the central component of the basal RNA polymerase II transcription machinery. It is composed of mobile elements that move relative to each other. RPB11 is part of the core element with the central large cleft. This is Probable DNA-directed RNA polymerase II subunit RPB11 (rpb-11) from Caenorhabditis briggsae.